We begin with the raw amino-acid sequence, 662 residues long: Glycogen debranching enzyme (662 aa).

The active-site Nucleophile is aspartate 338. The active-site Proton donor is glutamate 373.

Belongs to the glycosyl hydrolase 13 family.

The enzyme catalyses Hydrolysis of (1-&gt;6)-alpha-D-glucosidic linkages to branches with degrees of polymerization of three or four glucose residues in limit dextrin.. The protein operates within glycan degradation; glycogen degradation. Its function is as follows. Removes maltotriose and maltotetraose chains that are attached by 1,6-alpha-linkage to the limit dextrin main chain, generating a debranched limit dextrin. In Yersinia pestis bv. Antiqua (strain Angola), this protein is Glycogen debranching enzyme.